A 435-amino-acid polypeptide reads, in one-letter code: Glutamyl-tRNA(Gln) amidotransferase subunit D (435 aa).

In terms of domain architecture, Asparaginase/glutaminase spans 91 to 419 (PDVSIISTGG…EMAREMMREN (329 aa)). Active-site residues include T101, T177, D178, and K254.

This sequence belongs to the asparaginase 1 family. GatD subfamily. In terms of assembly, heterodimer of GatD and GatE.

It carries out the reaction L-glutamyl-tRNA(Gln) + L-glutamine + ATP + H2O = L-glutaminyl-tRNA(Gln) + L-glutamate + ADP + phosphate + H(+). In terms of biological role, allows the formation of correctly charged Gln-tRNA(Gln) through the transamidation of misacylated Glu-tRNA(Gln) in organisms which lack glutaminyl-tRNA synthetase. The reaction takes place in the presence of glutamine and ATP through an activated gamma-phospho-Glu-tRNA(Gln). The GatDE system is specific for glutamate and does not act on aspartate. This chain is Glutamyl-tRNA(Gln) amidotransferase subunit D (gatD), found in Methanothermobacter thermautotrophicus (strain ATCC 29096 / DSM 1053 / JCM 10044 / NBRC 100330 / Delta H) (Methanobacterium thermoautotrophicum).